Reading from the N-terminus, the 301-residue chain is Type II restriction enzyme BslI subunit beta (301 aa).

Residues 62-82 form a CHC2-type zinc finger; the sequence is CPDGHTKWNQNLTKEMTCSEC.

Heterotetramer of two alpha and two beta subunits. The alpha subunit is believed to be responsible for DNA recognition, while the beta subunit is thought to mediate cleavage. It depends on Zn(2+) as a cofactor.

The catalysed reaction is Endonucleolytic cleavage of DNA to give specific double-stranded fragments with terminal 5'-phosphates.. Its function is as follows. A P subtype restriction enzyme that recognizes the double-stranded sequence 5'-CCN(7)GG-3' and cleaves after N-7. The polypeptide is Type II restriction enzyme BslI subunit beta (Bacillus sp. (strain NEB-606)).